A 158-amino-acid chain; its full sequence is Small ribosomal subunit protein uS9 (158 aa).

It belongs to the universal ribosomal protein uS9 family.

The sequence is that of Small ribosomal subunit protein uS9 from Rhodopseudomonas palustris (strain BisA53).